Here is a 554-residue protein sequence, read N- to C-terminus: Apyrase (554 aa).

The signal sequence occupies residues 1–21; sequence MFKITVFIYVLQLILPSKVHS. A divalent metal cation is bound by residues Asp-43, His-45, Asp-92, Asn-124, His-224, and His-248. AMP is bound by residues Arg-358, Asn-394, Arg-399, Phe-418, Phe-504, and Asp-510.

This sequence belongs to the 5'-nucleotidase family. The cofactor is a divalent metal cation. Salivary gland (at protein level).

It localises to the secreted. It catalyses the reaction a ribonucleoside 5'-triphosphate + 2 H2O = a ribonucleoside 5'-phosphate + 2 phosphate + 2 H(+). Functionally, facilitates hematophagy by inhibiting ADP-dependent platelet aggregation in the host. Cleaves adenosine triphosphate (ATP) and adenosine diphosphate (ADP) to adenosine monophosphate (AMP) and inorganic phosphate. Shows potential for antithrombotic activity. Can induce basophil activation. May reduce probing time by facilitating the speed of locating blood. The sequence is that of Apyrase from Tabanus yao (Horsefly).